Reading from the N-terminus, the 163-residue chain is MKLNTLFNLNGAKKCSKRIGRGIGSGKGKTCGRGAKGQKSRAKVARGFEGGQTPLIKRLPKRGFKSMNKRNYNIINIITILRLVKANKIEYGAVIDKLLLLKLKMLKKSINKIKLLWANPSSLVLNSEDISLLTKLDLQFNLDEYSISARKNIIKLGMKVINN.

This sequence belongs to the universal ribosomal protein uL15 family. As to quaternary structure, part of the 50S ribosomal subunit.

In terms of biological role, binds to the 23S rRNA. This is Large ribosomal subunit protein uL15 from Orientia tsutsugamushi (strain Ikeda) (Rickettsia tsutsugamushi).